Reading from the N-terminus, the 189-residue chain is Isopentenyl-diphosphate Delta-isomerase 2 (189 aa).

Mn(2+)-binding residues include H24 and H30. Positions 28–160 (ALHRAISIFV…PETYSFWLAA (133 aa)) constitute a Nudix hydrolase domain. C65 is an active-site residue. C65 lines the Mg(2+) pocket. Mn(2+) is bound at residue H67. E85 contacts Mg(2+). Mn(2+)-binding residues include E110 and E112. E112 is an active-site residue.

This sequence belongs to the IPP isomerase type 1 family. The cofactor is Mg(2+). It depends on Mn(2+) as a cofactor.

The protein localises to the cytoplasm. The catalysed reaction is isopentenyl diphosphate = dimethylallyl diphosphate. It functions in the pathway isoprenoid biosynthesis; dimethylallyl diphosphate biosynthesis; dimethylallyl diphosphate from isopentenyl diphosphate: step 1/1. Its function is as follows. Catalyzes the 1,3-allylic rearrangement of the homoallylic substrate isopentenyl (IPP) to its highly electrophilic allylic isomer, dimethylallyl diphosphate (DMAPP). This Aromatoleum aromaticum (strain DSM 19018 / LMG 30748 / EbN1) (Azoarcus sp. (strain EbN1)) protein is Isopentenyl-diphosphate Delta-isomerase 2.